Here is a 131-residue protein sequence, read N- to C-terminus: Large-conductance mechanosensitive channel (131 aa).

Helical transmembrane passes span 21–41 (VGVI…ADVI) and 76–96 (GMFI…FLMI).

This sequence belongs to the MscL family. Homopentamer.

The protein resides in the cell inner membrane. Its function is as follows. Channel that opens in response to stretch forces in the membrane lipid bilayer. May participate in the regulation of osmotic pressure changes within the cell. This chain is Large-conductance mechanosensitive channel, found in Histophilus somni (strain 129Pt) (Haemophilus somnus).